We begin with the raw amino-acid sequence, 721 residues long: Glucans biosynthesis glucosyltransferase H (721 aa).

6 helical membrane-spanning segments follow: residues 53-75 (VLIM…QVLQ), 85-107 (VVLV…ALAG), 404-426 (GIGA…LISL), 456-478 (WVFA…LVLI), 490-512 (LRTF…VMMV), and 567-589 (WPLL…VALL).

This sequence belongs to the glycosyltransferase 2 family. OpgH subfamily.

The protein resides in the cell inner membrane. It functions in the pathway glycan metabolism; osmoregulated periplasmic glucan (OPG) biosynthesis. Involved in the biosynthesis of osmoregulated periplasmic glucans (OPGs). In Rhodopseudomonas palustris (strain ATCC BAA-98 / CGA009), this protein is Glucans biosynthesis glucosyltransferase H.